The primary structure comprises 449 residues: Probable pectate lyase P59 (449 aa).

The first 22 residues, 1–22 (MGGPKIKYSFLFLCITFATIIP), serve as a signal peptide directing secretion. 3 N-linked (GlcNAc...) asparagine glycosylation sites follow: asparagine 56, asparagine 80, and asparagine 81. 3 residues coordinate Ca(2+): aspartate 245, aspartate 269, and aspartate 273. The active site involves arginine 325.

Belongs to the polysaccharide lyase 1 family. Ca(2+) serves as cofactor. In terms of tissue distribution, expressed in anthers and pollen.

It catalyses the reaction Eliminative cleavage of (1-&gt;4)-alpha-D-galacturonan to give oligosaccharides with 4-deoxy-alpha-D-galact-4-enuronosyl groups at their non-reducing ends.. It participates in glycan metabolism; pectin degradation; 2-dehydro-3-deoxy-D-gluconate from pectin: step 2/5. In terms of biological role, might be needed during pollen development and tube growth. This chain is Probable pectate lyase P59 (LAT59), found in Solanum lycopersicum (Tomato).